Consider the following 118-residue polypeptide: Small ribosomal subunit protein uS13 (118 aa).

Residues 91 to 118 (HRRGLPVRGQRTKTNARTRKGPRKPIKK) form a disordered region.

Belongs to the universal ribosomal protein uS13 family. Part of the 30S ribosomal subunit. Forms a loose heterodimer with protein S19. Forms two bridges to the 50S subunit in the 70S ribosome.

Functionally, located at the top of the head of the 30S subunit, it contacts several helices of the 16S rRNA. In the 70S ribosome it contacts the 23S rRNA (bridge B1a) and protein L5 of the 50S subunit (bridge B1b), connecting the 2 subunits; these bridges are implicated in subunit movement. Contacts the tRNAs in the A and P-sites. This is Small ribosomal subunit protein uS13 from Serratia proteamaculans (strain 568).